A 910-amino-acid chain; its full sequence is Potassium/sodium hyperpolarization-activated cyclic nucleotide-gated channel 1 (910 aa).

The tract at residues 1-75 is disordered; sequence MEGGGKPNSA…PAGSFEDAEG (75 aa). The Cytoplasmic portion of the chain corresponds to 1-131; that stretch reads MEGGGKPNSA…WIIHPYSDFR (131 aa). The chain crosses the membrane as a helical span at residues 132 to 153; the sequence is FYWDLIMLIMMVGNLVIIPVGI. Topologically, residues 154–162 are extracellular; the sequence is TFFTEQTTT. The helical transmembrane segment at 163–183 threads the bilayer; sequence PWIIFNVASDTVFLLDLIMNF. The Cytoplasmic segment spans residues 184–204; the sequence is RTGTVNEDSSEIILDPKVIKM. A helical transmembrane segment spans residues 205–225; it reads NYLKSWFVVDFISSIPVDYIF. Over 226 to 249 the chain is Extracellular; that stretch reads LIVEKGMDSEVYKTARALRIVRFT. Residues 250–270 traverse the membrane as a helical; Voltage-sensor segment; the sequence is KILSLLRLLRLSRLIRYIHQW. At 271-284 the chain is on the cytoplasmic side; the sequence is EEIFHMTYDLASAV. Residues 285–307 form a helical membrane-spanning segment; the sequence is VRIFNLIGMMLLLCHWDGCLQFL. Residues 308 to 333 are Extracellular-facing; that stretch reads VPLLQDFPPDCWVSLNEMVNDSWGKQ. A glycan (N-linked (GlcNAc...) asparagine) is linked at Asn327. Positions 334–355 form an intramembrane region, pore-forming; sequence YSYALFKAMSHMLCIGYGAQAP. The Selectivity filter motif lies at 347-351; sequence CIGYG. The Extracellular segment spans residues 356–360; sequence VSMSD. A helical transmembrane segment spans residues 361–381; the sequence is LWITMLSMIVGATCYAMFVGH. Residues 382–910 are Cytoplasmic-facing; sequence ATALIQSLDS…AEKPRFASNL (529 aa). Gly528, Glu529, Cys531, Arg538, Thr539, Arg579, and Arg582 together coordinate 3',5'-cyclic AMP. 3 disordered regions span residues 634–681, 771–791, and 865–910; these read TALN…QPSA, QQQQ…VHKS, and QMSS…ASNL. Positions 639–680 are enriched in low complexity; the sequence is TSSTTTPTSRMRTQSPPVYTATSLSHSNLHSPSPSTQTPQPS. The segment covering 780-791 has biased composition (polar residues); the sequence is GSSTPKNEVHKS. A compositionally biased stretch (pro residues) spans 875–885; sequence RGVPPAPPPPA. Basic and acidic residues predominate over residues 900–910; sequence DAEKPRFASNL.

This sequence belongs to the potassium channel HCN family. Homotetramer. Heterotetramer with HCN2. The potassium channel is composed of a homo- or heterotetrameric complex of pore-forming subunits. Interacts with KCNE2. Interacts with the SH3 domain of CSK. Post-translationally, N-glycosylated. In terms of tissue distribution, predominantly expressed in brain. Highly expressed in apical dendrites of pyramidal neurons in the cortex, in the layer corresponding to the stratum lacunosum-moleculare in the hippocampus and in axons of basket cells in the cerebellum (at protein level). Expressed in a subset of elongated cells in taste buds.

Its subcellular location is the cell membrane. It catalyses the reaction Na(+)(in) = Na(+)(out). The catalysed reaction is K(+)(in) = K(+)(out). Activated by cAMP. cAMP binding causes a conformation change that leads to the assembly of an active tetramer and channel opening. Compared to other family members, cAMP has less stimulatory effect on HCN1 because part of the molecules already contain bound cAMP and form homotetramers when cAMP levels are low, this inherent tetramerization in HCN1 results in a weaker response to increased cAMP. In terms of biological role, hyperpolarization-activated ion channel that are permeable to sodium and potassium ions. Exhibits weak selectivity for potassium over sodium ions. Contributes to the native pacemaker currents in heart (If) and in neurons (Ih). Participates in cerebellar mechanisms of motor learning. May mediate responses to sour stimuli. This chain is Potassium/sodium hyperpolarization-activated cyclic nucleotide-gated channel 1 (Hcn1), found in Mus musculus (Mouse).